A 429-amino-acid chain; its full sequence is Ribosomal RNA small subunit methyltransferase B (429 aa).

Residues 254–260, Asp-277, Asp-303, and Asp-322 each bind S-adenosyl-L-methionine; that span reads CAAPGGK. Cys-375 (nucleophile) is an active-site residue.

Belongs to the class I-like SAM-binding methyltransferase superfamily. RsmB/NOP family.

It is found in the cytoplasm. It carries out the reaction cytidine(967) in 16S rRNA + S-adenosyl-L-methionine = 5-methylcytidine(967) in 16S rRNA + S-adenosyl-L-homocysteine + H(+). Specifically methylates the cytosine at position 967 (m5C967) of 16S rRNA. This is Ribosomal RNA small subunit methyltransferase B from Shigella boydii serotype 18 (strain CDC 3083-94 / BS512).